A 319-amino-acid chain; its full sequence is Probable NAD(P)H-dependent D-xylose reductase xyl1 (319 aa).

Tyr50 (proton donor) is an active-site residue. His112 contributes to the substrate binding site. Residues 166–167, 215–224, and 271–281 contribute to the NAD(+) site; these read SN, SSFGPLSFLE, and KSNNPTRLSQN.

It belongs to the aldo/keto reductase family.

It carries out the reaction xylitol + NAD(+) = D-xylose + NADH + H(+). The catalysed reaction is xylitol + NADP(+) = D-xylose + NADPH + H(+). It participates in carbohydrate metabolism; D-xylose degradation. Functionally, catalyzes the initial reaction in the xylose utilization pathway by reducing D-xylose into xylitol. Xylose is a major component of hemicelluloses such as xylan. Most fungi utilize D-xylose via three enzymatic reactions, xylose reductase (XR), xylitol dehydrogenase (XDH), and xylulokinase, to form xylulose 5-phosphate, which enters pentose phosphate pathway. The sequence is that of Probable NAD(P)H-dependent D-xylose reductase xyl1 (xyl1) from Aspergillus oryzae (strain ATCC 42149 / RIB 40) (Yellow koji mold).